A 695-amino-acid chain; its full sequence is Elongation factor G (695 aa).

The tr-type G domain maps to 10-289 (KNLRNIGIMA…AVVAWMPSPL (280 aa)). GTP-binding positions include 19–26 (AHIDAGKT), 83–87 (DTPGH), and 137–140 (NKMD).

It belongs to the TRAFAC class translation factor GTPase superfamily. Classic translation factor GTPase family. EF-G/EF-2 subfamily.

The protein resides in the cytoplasm. In terms of biological role, catalyzes the GTP-dependent ribosomal translocation step during translation elongation. During this step, the ribosome changes from the pre-translocational (PRE) to the post-translocational (POST) state as the newly formed A-site-bound peptidyl-tRNA and P-site-bound deacylated tRNA move to the P and E sites, respectively. Catalyzes the coordinated movement of the two tRNA molecules, the mRNA and conformational changes in the ribosome. This Protochlamydia amoebophila (strain UWE25) protein is Elongation factor G.